Reading from the N-terminus, the 141-residue chain is Large ribosomal subunit protein uL6 (141 aa).

It belongs to the universal ribosomal protein uL6 family.

This chain is Large ribosomal subunit protein uL6, found in Haemonchus contortus (Barber pole worm).